A 60-amino-acid polypeptide reads, in one-letter code: Light-harvesting polypeptide B-885 alpha-2 chain (60 aa).

The Cytoplasmic segment spans residues 1 to 16; it reads SAPAQWKLWLVMDPRT. A helical membrane pass occupies residues 17-37; sequence VMIGTAAWLGVLALLIHFLLL. His-33 contacts a bacteriochlorophyll. Topologically, residues 38–60 are periplasmic; the sequence is GTERFNWIDTGLKEQKATAAAQA.

This sequence belongs to the antenna complex alpha subunit family. As to quaternary structure, the core complex is formed by different alpha and beta chains, binding bacteriochlorophyll molecules, and arranged most probably in tetrameric structures disposed around the reaction center. The non-pigmented gamma chains may constitute additional components.

The protein localises to the cell inner membrane. Antenna complexes are light-harvesting systems, which transfer the excitation energy to the reaction centers. This is Light-harvesting polypeptide B-885 alpha-2 chain from Rhodocyclus tenuis (Rhodospirillum tenue).